The following is a 498-amino-acid chain: Protein adenylyltransferase Fic (498 aa).

The chain crosses the membrane as a helical span at residues 43-63 (FAFLAFLAGSFLAFSLHALIS). TPR repeat units follow at residues 126-159 (ALSSLRLAQDMYMAGKDDKAARLFEHALALAPRH) and 160-194 (PEVLLRYGEFLEHNQRNIVLADQYYFQALTINPSH). An Inhibitory (S/T)XXXE(G/N) motif motif is present at residues 251–256 (SVGIEG). ATP-binding positions include Glu255 and 336–339 (VGGH). The region spanning 305 to 440 (ITIKDILELH…IRPFVRFIAD (136 aa)) is the Fido domain. The active site involves His383. ATP is bound by residues 387 to 394 (DGNGRTSR), 419 to 420 (YY), and Asn427.

It belongs to the fic family. As to quaternary structure, homodimer.

It localises to the membrane. It catalyses the reaction L-tyrosyl-[protein] + ATP = O-(5'-adenylyl)-L-tyrosyl-[protein] + diphosphate. It carries out the reaction L-threonyl-[protein] + ATP = 3-O-(5'-adenylyl)-L-threonyl-[protein] + diphosphate. The enzyme catalyses 3-O-(5'-adenylyl)-L-threonyl-[protein] + H2O = L-threonyl-[protein] + AMP + H(+). With respect to regulation, the side chain of Glu-255 determines which of the two opposing activities (AMPylase or de-AMPylase) will take place. In response to endoplasmic reticulum stress, mediates de-AMPylase activity. Adenylyltransferase activity is inhibited by the inhibitory helix present at the N-terminus: Glu-255 binds ATP and competes with ATP-binding at Arg-394, thereby preventing adenylyltransferase activity. In unstressed cells, disengagement of Glu-255 promotes adenylyltransferase activity. Activation dissociates ATP-binding from Glu-255, allowing ordered binding of the entire ATP moiety with the alpha-phosphate in an orientation that is productive for accepting an incoming target hydroxyl side chain. Its function is as follows. Protein that can both mediate the addition of adenosine 5'-monophosphate (AMP) to specific residues of target proteins (AMPylation), and the removal of the same modification from target proteins (de-AMPylation), depending on the context. The side chain of Glu-255 determines which of the two opposing activities (AMPylase or de-AMPylase) will take place. Acts as a key regulator of the unfolded protein response (UPR) by mediating AMPylation or de-AMPylation of Hsc70-3/BiP. In unstressed cells, acts as an adenylyltransferase by mediating AMPylation of Hsc70-3/BiP at 'Thr-518', thereby inactivating it. In response to endoplasmic reticulum stress, acts as a phosphodiesterase by mediating removal of ATP (de-AMPylation) from Hsc70-3/BiP at 'Thr-518', leading to restore HSPA5/BiP activity. The protein is Protein adenylyltransferase Fic of Drosophila willistoni (Fruit fly).